Here is a 685-residue protein sequence, read N- to C-terminus: Multicopper oxidase VdtB (685 aa).

The first 17 residues, 1 to 17 (MPAYLLLLACNVLLVLG), serve as a signal peptide directing secretion. 2 consecutive Plastocyanin-like domains span residues 26 to 139 (LTWE…IRRK) and 168 to 368 (IMML…RYKN). N71 carries N-linked (GlcNAc...) asparagine glycosylation. The Cu cation site is built by H75, H77, H119, and H121. 5 N-linked (GlcNAc...) asparagine glycosylation sites follow: N178, N229, N253, N432, and N475. The region spanning 466–585 (DDDLIIRTQN…DNGMAMAILD (120 aa)) is the Plastocyanin-like 3 domain. Position 500 (H500) interacts with Cu cation. N517 carries N-linked (GlcNAc...) asparagine glycosylation. The chain crosses the membrane as a helical span at residues 627–647 (SLVWAGGAAVVLLSLFIGGLW).

This sequence belongs to the multicopper oxidase family.

The protein localises to the membrane. It carries out the reaction 4 semiviriditoxin + O2 = 2 (M)-viriditoxin + 2 H2O. It participates in secondary metabolite biosynthesis. Multicopper oxidase; part of the gene cluster that mediates the biosynthesis of viriditoxin, one of the 'classical' secondary metabolites produced by fungi and that has antibacterial activity. The first step is performed by the polyketide synthase VdtA which condenses one acetyl-CoA and 6 malonyl-CoA units to form the heptaketide monomer backbone of viriditoxin. The product of VdtA is then O-methylated on C7 by the O-methyltransferase VdtC. The O-methyl group is important for the stereoselective coupling of the monomers at the final step of viriditoxin biosynthesis. The short-chain dehydrogenase/reductase VdtF then acts as a stereospecific reductase converting the pyrone to dihydropyrone via the reduction of the C3-C4 double bond. The FAD-binding monooxygenase VdtE then converts the ketone group into a methyl-ester group to yield semi-viriditoxin. Finally, the laccase VdtB is involved in dimerization of 2 semi-viriditoxin molecules to yield the final viriditoxin. VdtB is responsible for the regioselective 6,6'-coupling of semi-viriditoxin, which yields (M)-viriditoxin and (P)-viriditoxin at a ratio of 1:2. The non-catalytic carboxylesterase-like protein VdtD affects the stereochemistical outcome of the coupling. The highly reducing polyketide synthase VdtX is not involved in viriditoxin synthesis, but might possibly play a role in the production of additional metabolites not identified yet. The protein is Multicopper oxidase VdtB of Byssochlamys spectabilis (Paecilomyces variotii).